Here is a 179-residue protein sequence, read N- to C-terminus: ADP-ribosylation factor-like protein 5A (179 aa).

Gly-2 is lipidated: N-myristoyl glycine. GTP contacts are provided by residues 23 to 30, 66 to 70, 125 to 128, and Ala-159; these read GLDNAGKT, DIGGQ, and NKQD.

Belongs to the small GTPase superfamily. Arf family.

Functionally, lacks ADP-ribosylation enhancing activity. This chain is ADP-ribosylation factor-like protein 5A (ARL5A), found in Bos taurus (Bovine).